Reading from the N-terminus, the 372-residue chain is AA9 family lytic polysaccharide monooxygenase C (372 aa).

A signal peptide spans 1-16 (MFRSALFLLLAPLALS). 2 residues coordinate Cu(2+): His-17 and His-99. A disulfide bond links Cys-59 and Cys-189. His-174 and Gln-184 together coordinate O2. Position 186 (Tyr-186) interacts with Cu(2+).

This sequence belongs to the polysaccharide monooxygenase AA9 family. It depends on Cu(2+) as a cofactor.

Its subcellular location is the secreted. The enzyme catalyses [(1-&gt;4)-beta-D-glucosyl]n+m + reduced acceptor + O2 = 4-dehydro-beta-D-glucosyl-[(1-&gt;4)-beta-D-glucosyl]n-1 + [(1-&gt;4)-beta-D-glucosyl]m + acceptor + H2O.. In terms of biological role, lytic polysaccharide monooxygenase (LPMO) that depolymerizes crystalline and amorphous polysaccharides via the oxidation of scissile alpha- or beta-(1-4)-glycosidic bonds, yielding C1 or C4 oxidation products. Catalysis by LPMOs requires the reduction of the active-site copper from Cu(II) to Cu(I) by a reducing agent and H(2)O(2) or O(2) as a cosubstrate. This chain is AA9 family lytic polysaccharide monooxygenase C, found in Aspergillus tamarii.